The sequence spans 728 residues: NF-kappa-B inhibitor zeta (728 aa).

Residues 45–107 (GAGDTGYLSA…PHMGVGRQQR (63 aa)) are disordered. Residues 53–82 (SAVPSAPGSPGSDSSDFSSTSSVSSCGAVE) show a composition bias toward low complexity. Positions 83 to 96 (SRPRGGARAERPQV) are enriched in basic and acidic residues. The OCA domain occupies 107–129 (RGPFQGVRVKNSVKELLLHIRSN). The short motif at 163–178 (KRKGPDPLSDGPVCKR) is the Nuclear localization signal element. Polar residues-rich tracts occupy residues 241–250 (PTVPQNSPRD) and 268–288 (QPFQVSGSPQMMDQASMYQYS). Residues 241–334 (PTVPQNSPRD…SQSPKYDSNL (94 aa)) are disordered. A compositionally biased stretch (low complexity) spans 303 to 315 (QQQHQQNYPHNSP). The segment covering 316 to 330 (LQFSPYSRMSQSPKY) has biased composition (polar residues). Residues 329 to 403 (KYDSNLFDTH…VGVHDVGSHS (75 aa)) form a required for transcriptional activity region. Positions 414–728 (MGSPMNTTQL…KSIQQRAPPY (315 aa)) are interaction with NFKB1/p50. ANK repeat units lie at residues 453-482 (DGDTFLHIAVAQGRRALSYVLARKMNALHM), 489-518 (NGQSAFQVAVAANQHLIVQDLVNLGAQVNT), 522-551 (WGRTPLHVCAEKGHSQVLQAIQKGAVRSNQ), 561-589 (DGLTPLHCAVVAHNAVVHELQRNRQSHSP), 591-617 (VQDLLLRNKSLVDTIKCLIQMGAAVEA), 622-651 (SGRTALHLAAEEANLELIRLFLELPSCLSF), and 658-691 (NGNTALHVAASLQYRVTQLDAVRLLMRKGADPST).

Interacts with NFKB1/p50. Interacts with RELA. Interacts with AKIRIN2. As to expression, expressed in kidney, liver, lung and heart. Expressed at very low levels in skeletal muscle, spleen and brain.

It localises to the nucleus. Its function is as follows. Involved in regulation of NF-kappa-B transcription factor complexes. Inhibits NF-kappa-B activity without affecting its nuclear translocation upon stimulation. Inhibits DNA-binding of RELA and NFKB1/p50, and of the NF-kappa-B p65-p50 heterodimer and the NF-kappa-B p50-p50 homodimer. Also seems to activate NF-kappa-B-mediated transcription. In vitro, upon association with NFKB1/p50 has transcriptional activation activity and, together with NFKB1/p50 and RELA, is recruited to LCN2 promoters. Promotes transcription of LCN2 and DEFB4. Is recruited to IL-6 promoters and activates IL-6 but decreases TNF-alpha production in response to LPS. Seems to be involved in the induction of inflammatory genes activated through TLR/IL-1 receptor signaling. Involved in the induction of T helper 17 cells (Th17) differentiation upon recognition of antigen by T cell antigen receptor (TCR). This is NF-kappa-B inhibitor zeta (Nfkbiz) from Mus musculus (Mouse).